A 126-amino-acid polypeptide reads, in one-letter code: Cyclin-dependent kinase 2-associated protein 2 (126 aa).

Residues 1 to 48 (MSYKPIAPAPSSTPGSSTPGPGTPVPTGSVPSPSGSVPGAGAPFRPLF) are disordered. Residues 9-43 (APSSTPGSSTPGPGTPVPTGSVPSPSGSVPGAGAP) show a composition bias toward low complexity. The interval 64–106 (PPGAQGSQSTYTDLLSVIEEMGKEIRPTYAGSKSAMERLKRGI) is interaction with CDK2.

The protein belongs to the CDK2AP family. As to quaternary structure, component of the nucleosome remodeling and deacetylase (NuRD) repressor complex, composed of core proteins MTA1, MTA2, MTA3, RBBP4, RBBP7, HDAC1, HDAC2, MBD2, MBD3, and peripherally associated proteins CDK2AP1, CDK2AP2, GATAD2A, GATAD2B, CHD3, CHD4 and CHD5. The exact stoichiometry of the NuRD complex is unknown, and some subunits such as MBD2 and MBD3, GATAD2A and GATAD2B, and CHD3, CHD4 and CHD5 define mutually exclusive NuRD complexes. Interacts with CDK2AP1. Interacts with CDK2. Interacts with MAPK1. Post-translationally, phosphorylated by MAPK1 and CDK2. Ubiquitous.

It is found in the cytoplasm. It localises to the nucleus. Acts as a component of the histone deacetylase NuRD complex which participates in the remodeling of chromatin. Inhibits cell cycle G1/S phase transition by repressing CDK2 expression and activation; represses CDK2 activation by inhibiting its interaction with cyclin E and A. Plays a role in regulating the self-renewal of embryonic stem cells (ESCs) and in maintaining cell survival during terminal differentiation of ESCs. Regulates microtubule organization of metaphase II oocytes. In Homo sapiens (Human), this protein is Cyclin-dependent kinase 2-associated protein 2 (CDK2AP2).